Consider the following 336-residue polypeptide: DNA-directed RNA polymerase subunit alpha (336 aa).

The alpha N-terminal domain (alpha-NTD) stretch occupies residues 1 to 232 (MIQKNWQELI…DQLGVFVNFD (232 aa)). The tract at residues 248–336 (FNPALLKKVD…DLAKRYEDQY (89 aa)) is alpha C-terminal domain (alpha-CTD).

This sequence belongs to the RNA polymerase alpha chain family. Homodimer. The RNAP catalytic core consists of 2 alpha, 1 beta, 1 beta' and 1 omega subunit. When a sigma factor is associated with the core the holoenzyme is formed, which can initiate transcription.

It carries out the reaction RNA(n) + a ribonucleoside 5'-triphosphate = RNA(n+1) + diphosphate. In terms of biological role, DNA-dependent RNA polymerase catalyzes the transcription of DNA into RNA using the four ribonucleoside triphosphates as substrates. The polypeptide is DNA-directed RNA polymerase subunit alpha (Rhizobium etli (strain CIAT 652)).